A 122-amino-acid polypeptide reads, in one-letter code: Large ribosomal subunit protein uL14 (122 aa).

The protein belongs to the universal ribosomal protein uL14 family. As to quaternary structure, part of the 50S ribosomal subunit. Forms a cluster with proteins L3 and L19. In the 70S ribosome, L14 and L19 interact and together make contacts with the 16S rRNA in bridges B5 and B8.

Functionally, binds to 23S rRNA. Forms part of two intersubunit bridges in the 70S ribosome. This Bradyrhizobium diazoefficiens (strain JCM 10833 / BCRC 13528 / IAM 13628 / NBRC 14792 / USDA 110) protein is Large ribosomal subunit protein uL14.